Consider the following 760-residue polypeptide: Prolyl endopeptidase FAP (760 aa).

At 1 to 4 (MKTW) the chain is on the cytoplasmic side. The chain crosses the membrane as a helical; Signal-anchor for type II membrane protein span at residues 5–25 (VKIVFGVATSAVLALLVMCIV). Residues 26–760 (LRPSRVHNSE…FLKQCFSLSD (735 aa)) are Extracellular-facing. N-linked (GlcNAc...) asparagine glycans are attached at residues asparagine 49, asparagine 92, and asparagine 99. Residues glutamate 203 and glutamate 204 each contribute to the substrate site. 2 N-linked (GlcNAc...) asparagine glycosylation sites follow: asparagine 227 and asparagine 314. Intrachain disulfides connect cysteine 321-cysteine 332, cysteine 438-cysteine 441, and cysteine 448-cysteine 466. Catalysis depends on serine 624, which acts as the Charge relay system. Cysteine 643 and cysteine 755 are disulfide-bonded. A glycan (N-linked (GlcNAc...) asparagine) is linked at asparagine 679. Residues aspartate 702 and histidine 734 each act as charge relay system in the active site.

The protein belongs to the peptidase S9B family. In terms of assembly, homodimer; homodimerization is required for activity of both plasma membrane and soluble forms. The monomer is inactive. Heterodimer with DPP4. Interacts with PLAUR; the interaction occurs at the cell surface of invadopodia membranes. Interacts with ITGB1. Interacts with ITGA3. Associates with integrin alpha-3/beta-1; the association occurs in a collagen-dependent manner at the cell surface of invadopodia membranes. Post-translationally, N-glycosylated. In terms of processing, the N-terminus may be blocked. In terms of tissue distribution, expressed in adipose tissue. Expressed in the dermal fibroblasts in the fetal skin. Expressed in the granulation tissue of healing wounds and on reactive stromal fibroblast in epithelial cancers. Expressed in activated fibroblast-like synoviocytes from inflamed synovial tissues. Expressed in activated hepatic stellate cells (HSC) and myofibroblasts from cirrhotic liver, but not detected in normal liver. Expressed in glioma cells (at protein level). Expressed in glioblastomas and glioma cells. Isoform 1 and isoform 2 are expressed in melanoma, carcinoma and fibroblast cell lines.

It is found in the cell surface. The protein resides in the cell membrane. It localises to the cell projection. The protein localises to the lamellipodium membrane. Its subcellular location is the invadopodium membrane. It is found in the ruffle membrane. The protein resides in the membrane. It localises to the secreted. The protein localises to the cytoplasm. The catalysed reaction is Hydrolysis of Pro-|-Xaa &gt;&gt; Ala-|-Xaa in oligopeptides.. The enzyme catalyses Release of an N-terminal dipeptide, Xaa-Yaa-|-Zaa-, from a polypeptide, preferentially when Yaa is Pro, provided Zaa is neither Pro nor hydroxyproline.. Gelatinase activity is inhibited by serine-protease inhibitors, such as phenylmethylsulfonyl fluoride (PMSF), 4-(2-aminoethyl)-benzenesulfonyl fluoride hydrochloride (AEBSF), 4-amidino phenylsulfonyl fluoride (APSF) and diisopropyl fluorophosphate (DFP), N-ethylmaleimide (NEM) and phenylmethylsulfonyl fluoride (PMSF). Dipeptidyl peptidase activity is inhibited by 2,2'-azino-bis(3-ethylbenzthiazoline-6-sulfonic acid), diisopropylfluorophosphate (DFP). Prolyl endopeptidase activity is inhibited by the boronic acid peptide Ac-Gly-BoroPro, Ac-Gly-Pro-chloromethyl ketone and Thr-Ser-Gly-chloromethyl ketone. Cell surface glycoprotein serine protease that participates in extracellular matrix degradation and involved in many cellular processes including tissue remodeling, fibrosis, wound healing, inflammation and tumor growth. Both plasma membrane and soluble forms exhibit post-proline cleaving endopeptidase activity, with a marked preference for Ala/Ser-Gly-Pro-Ser/Asn/Ala consensus sequences, on substrate such as alpha-2-antiplasmin SERPINF2 and SPRY2. Degrade also gelatin, heat-denatured type I collagen, but not native collagen type I and IV, vitronectin, tenascin, laminin, fibronectin, fibrin or casein. Also has dipeptidyl peptidase activity, exhibiting the ability to hydrolyze the prolyl bond two residues from the N-terminus of synthetic dipeptide substrates provided that the penultimate residue is proline, with a preference for Ala-Pro, Ile-Pro, Gly-Pro, Arg-Pro and Pro-Pro. Natural neuropeptide hormones for dipeptidyl peptidase are the neuropeptide Y (NPY), peptide YY (PYY), substance P (TAC1) and brain natriuretic peptide 32 (NPPB). The plasma membrane form, in association with either DPP4, PLAUR or integrins, is involved in the pericellular proteolysis of the extracellular matrix (ECM), and hence promotes cell adhesion, migration and invasion through the ECM. Plays a role in tissue remodeling during development and wound healing. Participates in the cell invasiveness towards the ECM in malignant melanoma cancers. Enhances tumor growth progression by increasing angiogenesis, collagen fiber degradation and apoptosis and by reducing antitumor response of the immune system. Promotes glioma cell invasion through the brain parenchyma by degrading the proteoglycan brevican. Acts as a tumor suppressor in melanocytic cells through regulation of cell proliferation and survival in a serine protease activity-independent manner. The sequence is that of Prolyl endopeptidase FAP from Homo sapiens (Human).